Reading from the N-terminus, the 78-residue chain is uncharacterized protein (78 aa).

This is an uncharacterized protein from Escherichia coli O6:H1 (strain CFT073 / ATCC 700928 / UPEC).